Consider the following 311-residue polypeptide: Linearmycin resistance ATP-binding protein LnrL (311 aa).

Positions 2–232 constitute an ABC transporter domain; that stretch reads LQAENIKKAY…LGGDTIIQLT (231 aa). 34–41 is a binding site for ATP; the sequence is GPNGAGKS.

It belongs to the ABC transporter superfamily. In terms of assembly, the complex is composed of two ATP-binding proteins (LnrL) and two transmembrane proteins (LnrM and LnrN).

In terms of biological role, required for resistance to linearmycins, a family of antibiotic-specialized metabolites produced by some streptomycetes. Part of the ABC transporter complex LnrLMN that probably facilitates linearmycin removal from the membrane. Responsible for energy coupling to the transport system. Also mediates KinC-dependent biofilm morphology. The sequence is that of Linearmycin resistance ATP-binding protein LnrL from Bacillus subtilis (strain 168).